A 174-amino-acid chain; its full sequence is Crossover junction endodeoxyribonuclease RuvC (174 aa).

Residues Asp-8, Glu-68, and Asp-140 contribute to the active site. Mg(2+) contacts are provided by Asp-8, Glu-68, and Asp-140.

The protein belongs to the RuvC family. In terms of assembly, homodimer which binds Holliday junction (HJ) DNA. The HJ becomes 2-fold symmetrical on binding to RuvC with unstacked arms; it has a different conformation from HJ DNA in complex with RuvA. In the full resolvosome a probable DNA-RuvA(4)-RuvB(12)-RuvC(2) complex forms which resolves the HJ. Mg(2+) is required as a cofactor.

It localises to the cytoplasm. It carries out the reaction Endonucleolytic cleavage at a junction such as a reciprocal single-stranded crossover between two homologous DNA duplexes (Holliday junction).. The RuvA-RuvB-RuvC complex processes Holliday junction (HJ) DNA during genetic recombination and DNA repair. Endonuclease that resolves HJ intermediates. Cleaves cruciform DNA by making single-stranded nicks across the HJ at symmetrical positions within the homologous arms, yielding a 5'-phosphate and a 3'-hydroxyl group; requires a central core of homology in the junction. The consensus cleavage sequence is 5'-(A/T)TT(C/G)-3'. Cleavage occurs on the 3'-side of the TT dinucleotide at the point of strand exchange. HJ branch migration catalyzed by RuvA-RuvB allows RuvC to scan DNA until it finds its consensus sequence, where it cleaves and resolves the cruciform DNA. This Legionella pneumophila subsp. pneumophila (strain Philadelphia 1 / ATCC 33152 / DSM 7513) protein is Crossover junction endodeoxyribonuclease RuvC.